The following is a 158-amino-acid chain: Transcription elongation factor GreA (158 aa).

Belongs to the GreA/GreB family.

Necessary for efficient RNA polymerase transcription elongation past template-encoded arresting sites. The arresting sites in DNA have the property of trapping a certain fraction of elongating RNA polymerases that pass through, resulting in locked ternary complexes. Cleavage of the nascent transcript by cleavage factors such as GreA or GreB allows the resumption of elongation from the new 3'terminus. GreA releases sequences of 2 to 3 nucleotides. The sequence is that of Transcription elongation factor GreA from Zymomonas mobilis subsp. mobilis (strain ATCC 31821 / ZM4 / CP4).